The chain runs to 345 residues: MNIFTRYHLPRVVSGVILPLFLFHLLPYVTCQQESVPTNSIRQTNLSADSIIAIVVLAIFISLGMVSCCLHCIFYREEIGAAGQDVLHSRARRGLEKEVIESFPTFLYSEVKGLKIGKGGVECAICLSEFEDQETLRWMPPCSHTFHANCIDVWLSSWSTCPVCRANLSLKPGESYPYLNMDVETGGVQKLPNERSLTGNSVTTRSRSTGLLSSWRMAEIFVPRSHSTGHSLVQQLGENLDRFTLQLPEEVQRQLVSLNLIRRSHIVLPQAVSSRQGYRSGSVGSERGGFSQGRQTHRRALSMSFSFSFQTASVRSIHDMNDQAQAKDKYFGERSFERLMPEEKV.

A signal peptide spans Met-1–Cys-31. Residues Ser-50–Leu-70 form a helical membrane-spanning segment. The RING-type; atypical zinc-finger motif lies at Cys-123–Arg-165. Ser-264 is subject to Phosphoserine.

It belongs to the RING-type zinc finger family. ATL subfamily.

It localises to the membrane. It carries out the reaction S-ubiquitinyl-[E2 ubiquitin-conjugating enzyme]-L-cysteine + [acceptor protein]-L-lysine = [E2 ubiquitin-conjugating enzyme]-L-cysteine + N(6)-ubiquitinyl-[acceptor protein]-L-lysine.. It functions in the pathway protein modification; protein ubiquitination. This chain is Putative RING-H2 finger protein ATL36 (ATL36), found in Arabidopsis thaliana (Mouse-ear cress).